The sequence spans 414 residues: MLKRIPVTQLRLGMFVQSLCGSWLDHPFWKRGGFLLDSQADLQRLRESAVKEVWIDASKGLDLPEEAAVSAAAVLPVTMPAGPSPARVALEEEIRHAALLCSRAKAAVVSMFRDARMGQAIDTAHASDLVDEISASVLRHPNALLSLVRLKTSDEYTYMHSVAVCALMIALARQLELPDPLVREAGLAGLLHDIGKMAVPDPILNKPGKLTDPEFGLVRRHPQNGARMLLDCRQVSALVVDVCLHHHERIDGTGYPFGLAQEQISLLARMGAVCDVYDAITSDRPYKKGWNAAEAIRRMAEWNGHFDPQVFRAFVKAVGIYPVGALVRLESGRLGVVLEQHGRSLLTPRVKVFFSARSKVPIPQQVVDLGRAGQTDRIVGFEPAEAWNFRNLDEMWTGLAKSTGSYFDAGTGNP.

Positions 133–330 (ISASVLRHPN…YPVGALVRLE (198 aa)) constitute an HD-GYP domain. H160, H192, D193, H221, H246, and H247 together coordinate a divalent metal cation.

Monomer.

It catalyses the reaction 3',3'-c-di-GMP + 2 H2O = 2 GMP + 2 H(+). Activated by Mg(2+) and Mn(2+). Its function is as follows. Phosphodiesterase (PDE) that catalyzes the hydrolysis of cyclic diguanylate (c-di-GMP) to GMP. Hydrolyzes c-di-GMP to GMP in a two-step reaction, via the linear intermediate 5'-phosphoguanylyl(3'-&gt;5')guanosine (pGpG). In vitro, can use pGpG as an alternative substrate and hydrolyze it into GMP. Acts in regulation of motility, synthesis of virulence determinants and biofilm architecture. This chain is Cyclic di-GMP phosphodiesterase PA4108, found in Pseudomonas aeruginosa (strain ATCC 15692 / DSM 22644 / CIP 104116 / JCM 14847 / LMG 12228 / 1C / PRS 101 / PAO1).